The primary structure comprises 108 residues: ATP synthase peripheral stalk subunit F6, mitochondrial (108 aa).

The transit peptide at 1-32 directs the protein to the mitochondrion; it reads MILQRLFRLSSAVQSAISVSWRRNIGITAVAF. Residues K41, K46, and K79 each carry the N6-acetyllysine modification. K84 and K99 each carry N6-acetyllysine; alternate. Residues K84 and K99 each carry the N6-succinyllysine; alternate modification. K105 carries the N6-acetyllysine modification. Residue S108 is modified to Phosphoserine.

This sequence belongs to the eukaryotic ATPase subunit F6 family. In terms of assembly, component of the ATP synthase complex composed at least of ATP5F1A/subunit alpha, ATP5F1B/subunit beta, ATP5MC1/subunit c (homooctomer), MT-ATP6/subunit a, MT-ATP8/subunit 8, ATP5ME/subunit e, ATP5MF/subunit f, ATP5MG/subunit g, ATP5MK/subunit k, ATP5MJ/subunit j, ATP5F1C/subunit gamma, ATP5F1D/subunit delta, ATP5F1E/subunit epsilon, ATP5PF/subunit F6, ATP5PB/subunit b, ATP5PD/subunit d, ATP5PO/subunit OSCP. ATP synthase complex consists of a soluble F(1) head domain (subunits alpha(3) and beta(3)) - the catalytic core - and a membrane F(0) domain - the membrane proton channel (subunits c, a, 8, e, f, g, k and j). These two domains are linked by a central stalk (subunits gamma, delta, and epsilon) rotating inside the F1 region and a stationary peripheral stalk (subunits F6, b, d, and OSCP).

It is found in the mitochondrion. Its subcellular location is the mitochondrion inner membrane. Its function is as follows. Subunit F6, of the mitochondrial membrane ATP synthase complex (F(1)F(0) ATP synthase or Complex V) that produces ATP from ADP in the presence of a proton gradient across the membrane which is generated by electron transport complexes of the respiratory chain. ATP synthase complex consist of a soluble F(1) head domain - the catalytic core - and a membrane F(1) domain - the membrane proton channel. These two domains are linked by a central stalk rotating inside the F(1) region and a stationary peripheral stalk. During catalysis, ATP synthesis in the catalytic domain of F(1) is coupled via a rotary mechanism of the central stalk subunits to proton translocation. In vivo, can only synthesize ATP although its ATP hydrolase activity can be activated artificially in vitro. Part of the complex F(0) domain. Part of the complex F(0) domain and the peripheric stalk, which acts as a stator to hold the catalytic alpha(3)beta(3) subcomplex and subunit a/ATP6 static relative to the rotary elements. This is ATP synthase peripheral stalk subunit F6, mitochondrial from Bos taurus (Bovine).